A 169-amino-acid chain; its full sequence is Lipoprotein signal peptidase (169 aa).

Transmembrane regions (helical) follow at residues 4-24 (PICSTGLRWLWLAVVVVILDI), 29-49 (WVMAHFALYESVPLIPFFNLT), 70-90 (WFFAGIAIGISVVLMVMMYRS), and 101-121 (YALIIGGALGNLYDRLVHGAV). Residues Asp123 and Asp141 contribute to the active site. Residues 137–157 (FNLADVAISIGAVLVIFEGFL) form a helical membrane-spanning segment.

Belongs to the peptidase A8 family.

It localises to the cell inner membrane. The catalysed reaction is Release of signal peptides from bacterial membrane prolipoproteins. Hydrolyzes -Xaa-Yaa-Zaa-|-(S,diacylglyceryl)Cys-, in which Xaa is hydrophobic (preferably Leu), and Yaa (Ala or Ser) and Zaa (Gly or Ala) have small, neutral side chains.. It participates in protein modification; lipoprotein biosynthesis (signal peptide cleavage). In terms of biological role, this protein specifically catalyzes the removal of signal peptides from prolipoproteins. This chain is Lipoprotein signal peptidase, found in Yersinia pseudotuberculosis serotype O:1b (strain IP 31758).